Consider the following 710-residue polypeptide: Polyribonucleotide nucleotidyltransferase (710 aa).

2 residues coordinate Mg(2+): D487 and D493. In terms of domain architecture, KH spans 554–613 (PRIHTMKISAEKIKDVIGKGGAVIRALTEETGTTIEIEDDGTIKIAATEGAAAKEAIRRI). Positions 623–691 (GRIYTGKVAR…RQGRVRLSMK (69 aa)) constitute an S1 motif domain. The disordered stretch occupies residues 691 to 710 (KEAVEKPAEEANDASEAKGE).

This sequence belongs to the polyribonucleotide nucleotidyltransferase family. As to quaternary structure, component of the RNA degradosome, which is a multiprotein complex involved in RNA processing and mRNA degradation. Requires Mg(2+) as cofactor.

The protein resides in the cytoplasm. The catalysed reaction is RNA(n+1) + phosphate = RNA(n) + a ribonucleoside 5'-diphosphate. Involved in mRNA degradation. Catalyzes the phosphorolysis of single-stranded polyribonucleotides processively in the 3'- to 5'-direction. The protein is Polyribonucleotide nucleotidyltransferase of Vibrio campbellii (strain ATCC BAA-1116).